The following is a 155-amino-acid chain: Ribosomal RNA large subunit methyltransferase H (155 aa).

Residues Leu-73, Gly-104, and 123–128 contribute to the S-adenosyl-L-methionine site; that span reads LSPLTL.

Belongs to the RNA methyltransferase RlmH family. Homodimer.

It localises to the cytoplasm. The catalysed reaction is pseudouridine(1915) in 23S rRNA + S-adenosyl-L-methionine = N(3)-methylpseudouridine(1915) in 23S rRNA + S-adenosyl-L-homocysteine + H(+). Specifically methylates the pseudouridine at position 1915 (m3Psi1915) in 23S rRNA. In Pseudomonas putida (strain GB-1), this protein is Ribosomal RNA large subunit methyltransferase H.